A 491-amino-acid chain; its full sequence is Ketol-acid reductoisomerase (NADP(+)) (491 aa).

The 194-residue stretch at 15–208 (AQLGKCRFMG…GGHRAGVLES (194 aa)) folds into the KARI N-terminal Rossmann domain. Residues 45–48 (CGAQ), Arg68, Arg76, Ser78, and 108–110 (DKQ) each bind NADP(+). His132 is an active-site residue. Position 158 (Gly158) interacts with NADP(+). 2 KARI C-terminal knotted domains span residues 209 to 344 (SFVA…TAPQ) and 345 to 484 (YEGK…MTDM). The Mg(2+) site is built by Asp217, Glu221, Glu389, and Glu393. Position 414 (Ser414) interacts with substrate.

The protein belongs to the ketol-acid reductoisomerase family. Mg(2+) is required as a cofactor.

The catalysed reaction is (2R)-2,3-dihydroxy-3-methylbutanoate + NADP(+) = (2S)-2-acetolactate + NADPH + H(+). It carries out the reaction (2R,3R)-2,3-dihydroxy-3-methylpentanoate + NADP(+) = (S)-2-ethyl-2-hydroxy-3-oxobutanoate + NADPH + H(+). Its pathway is amino-acid biosynthesis; L-isoleucine biosynthesis; L-isoleucine from 2-oxobutanoate: step 2/4. It participates in amino-acid biosynthesis; L-valine biosynthesis; L-valine from pyruvate: step 2/4. Involved in the biosynthesis of branched-chain amino acids (BCAA). Catalyzes an alkyl-migration followed by a ketol-acid reduction of (S)-2-acetolactate (S2AL) to yield (R)-2,3-dihydroxy-isovalerate. In the isomerase reaction, S2AL is rearranged via a Mg-dependent methyl migration to produce 3-hydroxy-3-methyl-2-ketobutyrate (HMKB). In the reductase reaction, this 2-ketoacid undergoes a metal-dependent reduction by NADPH to yield (R)-2,3-dihydroxy-isovalerate. The sequence is that of Ketol-acid reductoisomerase (NADP(+)) from Shigella dysenteriae serotype 1 (strain Sd197).